Here is a 154-residue protein sequence, read N- to C-terminus: Protein-export protein SecB (154 aa).

It belongs to the SecB family. In terms of assembly, homotetramer, a dimer of dimers. One homotetramer interacts with 1 SecA dimer.

The protein resides in the cytoplasm. Its function is as follows. One of the proteins required for the normal export of preproteins out of the cell cytoplasm. It is a molecular chaperone that binds to a subset of precursor proteins, maintaining them in a translocation-competent state. It also specifically binds to its receptor SecA. This Buchnera aphidicola subsp. Schizaphis graminum (strain Sg) protein is Protein-export protein SecB.